Reading from the N-terminus, the 283-residue chain is Syntaxin VAM3 (283 aa).

Residues 1–26 (MSFFDIEAQSSKGNSQQEPQFSTNQK) form a disordered region. Topologically, residues 1 to 261 (MSFFDIEAQS…ADQHQRDRNK (261 aa)) are cytoplasmic. A compositionally biased stretch (polar residues) spans 8–25 (AQSSKGNSQQEPQFSTNQ). Coiled coils occupy residues 28 to 48 (KELS…EKEC) and 84 to 111 (LIHQ…SYNQ). Disordered regions lie at residues 116–146 (FPLK…DPES) and 162–182 (NEGQ…QGLS). The span at 127-144 (SKERKDIHPRTEAVRQDP) shows a compositional bias: basic and acidic residues. Positions 169-189 (QLQEEQEQQQQGLSQEELDFQ) form a coiled coil. Positions 190–252 (TIIHQERSQQ…QNANKQLTRA (63 aa)) constitute a t-SNARE coiled-coil homology domain. Residues 262 to 282 (CGKVTLIIIIVVCMVVLLAVL) traverse the membrane as a helical; Anchor for type IV membrane protein segment. A topological domain (vacuolar) is located at residue S283.

Belongs to the syntaxin family. As to quaternary structure, associates with VAM7.

Its subcellular location is the vacuole membrane. Its function is as follows. Required for vacuolar assembly. Provides the t-SNARE function in a late step of the vacuolar assembly. Required for homotypic vacuole membrane fusion, autophagy and fusion of biosynthetic transport vesicles with the vacuole. Required for the delivery of alpha-factor receptor-ligand complexes to the vacuole. This Saccharomyces cerevisiae (strain ATCC 204508 / S288c) (Baker's yeast) protein is Syntaxin VAM3 (VAM3).